Here is a 179-residue protein sequence, read N- to C-terminus: GTP-dependent dephospho-CoA kinase (179 aa).

GTP is bound by residues D43, V45, D62, E120, and D143.

The protein belongs to the GTP-dependent DPCK family.

The enzyme catalyses 3'-dephospho-CoA + GTP = GDP + CoA + H(+). It participates in cofactor biosynthesis; coenzyme A biosynthesis. Catalyzes the GTP-dependent phosphorylation of the 3'-hydroxyl group of dephosphocoenzyme A to form coenzyme A (CoA). The chain is GTP-dependent dephospho-CoA kinase from Haloarcula marismortui (strain ATCC 43049 / DSM 3752 / JCM 8966 / VKM B-1809) (Halobacterium marismortui).